An 89-amino-acid polypeptide reads, in one-letter code: Small ribosomal subunit protein uS15 (89 aa).

The protein belongs to the universal ribosomal protein uS15 family. Part of the 30S ribosomal subunit. Forms a bridge to the 50S subunit in the 70S ribosome, contacting the 23S rRNA.

One of the primary rRNA binding proteins, it binds directly to 16S rRNA where it helps nucleate assembly of the platform of the 30S subunit by binding and bridging several RNA helices of the 16S rRNA. In terms of biological role, forms an intersubunit bridge (bridge B4) with the 23S rRNA of the 50S subunit in the ribosome. This is Small ribosomal subunit protein uS15 from Porphyromonas gingivalis (strain ATCC 33277 / DSM 20709 / CIP 103683 / JCM 12257 / NCTC 11834 / 2561).